We begin with the raw amino-acid sequence, 149 residues long: D-aminoacyl-tRNA deacylase (149 aa).

The short motif at 137–138 (GP) is the Gly-cisPro motif, important for rejection of L-amino acids element.

The protein belongs to the DTD family. Homodimer.

It is found in the cytoplasm. It carries out the reaction glycyl-tRNA(Ala) + H2O = tRNA(Ala) + glycine + H(+). The enzyme catalyses a D-aminoacyl-tRNA + H2O = a tRNA + a D-alpha-amino acid + H(+). Functionally, an aminoacyl-tRNA editing enzyme that deacylates mischarged D-aminoacyl-tRNAs. Also deacylates mischarged glycyl-tRNA(Ala), protecting cells against glycine mischarging by AlaRS. Acts via tRNA-based rather than protein-based catalysis; rejects L-amino acids rather than detecting D-amino acids in the active site. By recycling D-aminoacyl-tRNA to D-amino acids and free tRNA molecules, this enzyme counteracts the toxicity associated with the formation of D-aminoacyl-tRNA entities in vivo and helps enforce protein L-homochirality. This is D-aminoacyl-tRNA deacylase from Thioalkalivibrio sulfidiphilus (strain HL-EbGR7).